Reading from the N-terminus, the 396-residue chain is Elongation factor Tu (396 aa).

The region spanning K10 to E206 is the tr-type G domain. The segment at G19–T26 is G1. G19 to T26 is a binding site for GTP. T26 contacts Mg(2+). Residues G60–S64 are G2. The G3 stretch occupies residues D81–G84. Residues D81–H85 and N136–D139 contribute to the GTP site. A G4 region spans residues N136 to D139. Residues S174–L176 are G5.

Belongs to the TRAFAC class translation factor GTPase superfamily. Classic translation factor GTPase family. EF-Tu/EF-1A subfamily. As to quaternary structure, monomer.

The protein localises to the cytoplasm. The enzyme catalyses GTP + H2O = GDP + phosphate + H(+). In terms of biological role, GTP hydrolase that promotes the GTP-dependent binding of aminoacyl-tRNA to the A-site of ribosomes during protein biosynthesis. The protein is Elongation factor Tu of Xylella fastidiosa (strain Temecula1 / ATCC 700964).